The primary structure comprises 349 residues: ATPase GET3 (349 aa).

26-33 serves as a coordination point for ATP; sequence KGGVGKTT. Residue Asp-57 is part of the active site. Positions 240 and 267 each coordinate ATP. Residues Cys-280 and Cys-283 each contribute to the Zn(2+) site.

It belongs to the arsA ATPase family. In terms of assembly, homodimer. Component of the Golgi to ER traffic (GET) complex, which is composed of GET1, GET2 and GET3. Within the complex, GET1 and GET2 form a heterotetramer which is stabilized by phosphatidylinositol binding and which binds to the GET3 homodimer. Interacts with the chloride channel protein GEF1.

It is found in the cytoplasm. The protein resides in the endoplasmic reticulum. The protein localises to the golgi apparatus. Its function is as follows. ATPase required for the post-translational delivery of tail-anchored (TA) proteins to the endoplasmic reticulum. Recognizes and selectively binds the transmembrane domain of TA proteins in the cytosol. This complex then targets to the endoplasmic reticulum by membrane-bound receptors GET1 and GET2, where the tail-anchored protein is released for insertion. This process is regulated by ATP binding and hydrolysis. ATP binding drives the homodimer towards the closed dimer state, facilitating recognition of newly synthesized TA membrane proteins. ATP hydrolysis is required for insertion. Subsequently, the homodimer reverts towards the open dimer state, lowering its affinity for the GET1-GET2 receptor, and returning it to the cytosol to initiate a new round of targeting. Cooperates with the HDEL receptor ERD2 to mediate the ATP-dependent retrieval of resident ER proteins that contain a C-terminal H-D-E-L retention signal from the Golgi to the ER. Involved in low-level resistance to the oxyanions arsenite and arsenate, and in heat tolerance. In Kluyveromyces lactis (strain ATCC 8585 / CBS 2359 / DSM 70799 / NBRC 1267 / NRRL Y-1140 / WM37) (Yeast), this protein is ATPase GET3.